The sequence spans 929 residues: Protocadherin gamma-B7 (929 aa).

A signal peptide spans Met-1 to Cys-30. Cadherin domains are found at residues Glu-31–Phe-133, Gln-134–Phe-242, Ser-243–Ile-347, Ile-348–Phe-452, Gly-453–Val-562, and Asp-570–Phe-675. The Extracellular segment spans residues Glu-31–Tyr-691. N-linked (GlcNAc...) asparagine glycosylation is found at Asn-419 and Asn-545. The chain crosses the membrane as a helical span at residues Leu-692–Ala-712. Topologically, residues Leu-713–Lys-929 are cytoplasmic. Disordered stretches follow at residues Gln-806–Asn-838 and Ala-899–Lys-929. Polar residues predominate over residues Ala-807–Asn-838. A compositionally biased stretch (basic residues) spans Asn-919–Lys-929.

The protein localises to the cell membrane. Functionally, potential calcium-dependent cell-adhesion protein. May be involved in the establishment and maintenance of specific neuronal connections in the brain. The chain is Protocadherin gamma-B7 (PCDHGB7) from Pan troglodytes (Chimpanzee).